The chain runs to 394 residues: Aspergillopepsin-1 (394 aa).

An N-terminal signal peptide occupies residues 1–20; that stretch reads MVVFSKTAALVLGLSTAVSA. The propeptide at 21-69 is activation peptide; the sequence is APAPTRKGFTINQIARPANKTRTVNLPGLYARSLAKFGGTVPQSVKEAA. The Peptidase A1 domain maps to 85-391; that stretch reads YLTPVTVGKS…NSEGPKLGFA (307 aa). Residue Asp101 is part of the active site. Ser129 and Ser304 each carry an O-linked (Man...) serine glycan. The cysteines at positions 319 and 354 are disulfide-linked.

The protein belongs to the peptidase A1 family. As to quaternary structure, monomer.

It localises to the secreted. The catalysed reaction is Hydrolysis of proteins with broad specificity. Generally favors hydrophobic residues in P1 and P1', but also accepts Lys in P1, which leads to activation of trypsinogen. Does not clot milk.. Functionally, secreted aspartic endopeptidase that allows assimilation of proteinaceous substrates. The scissile peptide bond is attacked by a nucleophilic water molecule activated by two aspartic residues in the active site. Shows a broad primary substrate specificity. Favors hydrophobic residues at the P1 and P1' positions, but also accepts a lysine residue in the P1 position, leading to the activation of trypsinogen and chymotrypsinogen A. The chain is Aspergillopepsin-1 (pepA) from Aspergillus phoenicis (Aspergillus saitoi).